Reading from the N-terminus, the 193-residue chain is Holliday junction branch migration complex subunit RuvA (193 aa).

The interval 1 to 64 (MIGRIAGTLI…EDAHLLYGFG (64 aa)) is domain I. The interval 65–143 (SAAERNTFRE…AELGHAPGAA (79 aa)) is domain II. Residues 144–151 (PVHDSAVD) are flexible linker. The tract at residues 151–193 (DILNALLALGYSEKEAATAIKQVPAGTGVSDGIKLALKALSKA) is domain III.

The protein belongs to the RuvA family. As to quaternary structure, homotetramer. Forms an RuvA(8)-RuvB(12)-Holliday junction (HJ) complex. HJ DNA is sandwiched between 2 RuvA tetramers; dsDNA enters through RuvA and exits via RuvB. An RuvB hexamer assembles on each DNA strand where it exits the tetramer. Each RuvB hexamer is contacted by two RuvA subunits (via domain III) on 2 adjacent RuvB subunits; this complex drives branch migration. In the full resolvosome a probable DNA-RuvA(4)-RuvB(12)-RuvC(2) complex forms which resolves the HJ.

It is found in the cytoplasm. The RuvA-RuvB-RuvC complex processes Holliday junction (HJ) DNA during genetic recombination and DNA repair, while the RuvA-RuvB complex plays an important role in the rescue of blocked DNA replication forks via replication fork reversal (RFR). RuvA specifically binds to HJ cruciform DNA, conferring on it an open structure. The RuvB hexamer acts as an ATP-dependent pump, pulling dsDNA into and through the RuvAB complex. HJ branch migration allows RuvC to scan DNA until it finds its consensus sequence, where it cleaves and resolves the cruciform DNA. This Cupriavidus pinatubonensis (strain JMP 134 / LMG 1197) (Cupriavidus necator (strain JMP 134)) protein is Holliday junction branch migration complex subunit RuvA.